The following is a 417-amino-acid chain: Gamma-glutamyl phosphate reductase (417 aa).

Belongs to the gamma-glutamyl phosphate reductase family.

It is found in the cytoplasm. It catalyses the reaction L-glutamate 5-semialdehyde + phosphate + NADP(+) = L-glutamyl 5-phosphate + NADPH + H(+). Its pathway is amino-acid biosynthesis; L-proline biosynthesis; L-glutamate 5-semialdehyde from L-glutamate: step 2/2. Catalyzes the NADPH-dependent reduction of L-glutamate 5-phosphate into L-glutamate 5-semialdehyde and phosphate. The product spontaneously undergoes cyclization to form 1-pyrroline-5-carboxylate. This is Gamma-glutamyl phosphate reductase from Enterococcus faecalis (strain ATCC 700802 / V583).